Reading from the N-terminus, the 2624-residue chain is Highly reducing polyketide synthase ALT1 (2624 aa).

One can recognise a Ketosynthase family 3 (KS3) domain in the interval 28 to 449; the sequence is VLPLAIVGMG…GSNAHCILES (422 aa). Cysteine 200 functions as the For beta-ketoacyl synthase activity in the catalytic mechanism. Residues 289-308 form a disordered region; the sequence is VRGTSSNSDGKTPGMSMPSS. Residues histidine 335 and histidine 372 each act as for beta-ketoacyl synthase activity in the active site. The span at 523–544 shows a compositional bias: polar residues; the sequence is ESYSNHHTLTETTNPSNNTATN. A disordered region spans residues 523-545; the sequence is ESYSNHHTLTETTNPSNNTATNG. The segment at 639–945 is malonyl-CoA:ACP transacylase (MAT) domain; sequence VFTGQGAQWA…GYTPAMIRGK (307 aa). The segment at 1009–1140 is N-terminal hotdog fold; that stretch reads HELLGSQTLE…GQVRPGRDAH (132 aa). The segment at 1009–1301 is dehydratase (DH) domain; it reads HELLGSQTLE…LEGGKFSPIE (293 aa). The PKS/mFAS DH domain maps to 1009–1306; that stretch reads HELLGSQTLE…FSPIEVDDGI (298 aa). The active-site Proton acceptor; for dehydratase activity is the histidine 1041. Residues 1157-1306 are C-terminal hotdog fold; it reads QYPRPVDSLY…FSPIEVDDGI (150 aa). Aspartate 1217 (proton donor; for dehydratase activity) is an active-site residue. Residues 1493-1599 are methyltransferase (CMet) domain; it reads LEIGAGTGGA…RKLLAPEGYL (107 aa). The tract at residues 1895 to 2205 is enoyl reductase (ER) (ER) domain; that stretch reads GLLQTLKWVD…KGTHLGKIVV (311 aa). Residues 2230–2509 form a ketoreductase (KR) domain region; the sequence is TYVLVGGLGG…DSDALRFFIT (280 aa). Residues 2522-2600 form the Carrier domain; sequence ASLDLVTRTI…GLAKLILDAL (79 aa). O-(pantetheine 4'-phosphoryl)serine is present on serine 2559.

It participates in mycotoxin biosynthesis. Highly reducing polyketide synthase; part of the gene cluster that mediates the biosynthesis of the host-selective toxins (HSTs) AAL-toxins, sphinganine-analog mycotoxins responsible for Alternaria stem canker on tomato by the tomato pathotype. The biosynthesis starts with the polyketide synthase ALT1-catalyzed C-16 carbon chain assembly from one starter acetyl-CoA unit with malonyl-CoA extender units. ALT1 also selectively transfers methyl groups at the first and the third cycle of chain elongation for AAL toxin. The C-16 polyketide chain is released from the enzyme by a nucleophilic attack of a carbanion, which is derived from R-carbon of glycin by decarboxylation, on the carbonyl carbon of polyketide acyl chain. This step is probably catalyzed by a pyridoxal 5'-phosphate-dependent aminoacyl transferase ALT4. The respective functions of the other enzymes encoded by the cluster have still to be elucidated. The sphingosine N-acyltransferase-like protein ALT7 seems not to act as a resistance/self-tolerance factor against the toxin in the toxin biosynthetic gene cluster, contrary to what is expected. The sequence is that of Highly reducing polyketide synthase ALT1 from Alternaria alternata (Alternaria rot fungus).